Reading from the N-terminus, the 250-residue chain is Pyrroloquinoline-quinone synthase (250 aa).

It belongs to the PqqC family.

It catalyses the reaction 6-(2-amino-2-carboxyethyl)-7,8-dioxo-1,2,3,4,7,8-hexahydroquinoline-2,4-dicarboxylate + 3 O2 = pyrroloquinoline quinone + 2 H2O2 + 2 H2O + H(+). It participates in cofactor biosynthesis; pyrroloquinoline quinone biosynthesis. In terms of biological role, ring cyclization and eight-electron oxidation of 3a-(2-amino-2-carboxyethyl)-4,5-dioxo-4,5,6,7,8,9-hexahydroquinoline-7,9-dicarboxylic-acid to PQQ. This Xanthomonas oryzae pv. oryzae (strain PXO99A) protein is Pyrroloquinoline-quinone synthase.